The sequence spans 389 residues: Zip homologous protein 3 (389 aa).

The RING-type zinc finger occupies 6-43 (CNKCFNRKPPDGFFISSCFHIFCTKCAKADLAVCLICK). The stretch at 123–164 (LAEATAWIQMAEKKLQASEEERVKAEREIEECQAKLKSMTNL) forms a coiled coil. Positions 366-389 (ISSQPGYLAQRKPINGRSFIGPAD) are disordered.

In terms of assembly, interacts with zhp-4; the interaction is required for their localization along paired chromosomes and stability, and for the formation of chiasma during meiotic recombination. Expressed througout the gonad (at protein level). Expressed in the germline.

Its subcellular location is the chromosome. In terms of biological role, recruited co-dependently with zhp-4 to the synaptonemal complex between homologous chromosome pairs to regulate the formation and number of crossover events between homologs during meiotic recombination. In the early stages of pachytene, in complex with zhp-4, recruited by the zhp-1-zhp-2 heterodimer to designated crossover sites along the homolog pair to stabilize other pro-crossover factors such as rmh-1, msh-5 and cosa-1. This in turn facilitates crossover and promotes the formation of chiasma in each meiotic nucleus at the late pachytene stage of meiosis. Plays a role in the segregation of homologous chromosomes following the completion of crossovers. Together with him-14 and msh-5 plays a role in the activation of DNA damage-dependent apoptosis at the DNA damage checkpoint in pachytene cells. In Caenorhabditis elegans, this protein is Zip homologous protein 3.